Here is a 258-residue protein sequence, read N- to C-terminus: Imidazole glycerol phosphate synthase subunit HisF (258 aa).

Catalysis depends on residues aspartate 11 and aspartate 130.

This sequence belongs to the HisA/HisF family. In terms of assembly, heterodimer of HisH and HisF.

The protein localises to the cytoplasm. It carries out the reaction 5-[(5-phospho-1-deoxy-D-ribulos-1-ylimino)methylamino]-1-(5-phospho-beta-D-ribosyl)imidazole-4-carboxamide + L-glutamine = D-erythro-1-(imidazol-4-yl)glycerol 3-phosphate + 5-amino-1-(5-phospho-beta-D-ribosyl)imidazole-4-carboxamide + L-glutamate + H(+). The protein operates within amino-acid biosynthesis; L-histidine biosynthesis; L-histidine from 5-phospho-alpha-D-ribose 1-diphosphate: step 5/9. IGPS catalyzes the conversion of PRFAR and glutamine to IGP, AICAR and glutamate. The HisF subunit catalyzes the cyclization activity that produces IGP and AICAR from PRFAR using the ammonia provided by the HisH subunit. The chain is Imidazole glycerol phosphate synthase subunit HisF from Bradyrhizobium sp. (strain ORS 278).